The sequence spans 359 residues: Peptide chain release factor 1 (359 aa).

Glutamine 235 is modified (N5-methylglutamine).

This sequence belongs to the prokaryotic/mitochondrial release factor family. In terms of processing, methylated by PrmC. Methylation increases the termination efficiency of RF1.

It is found in the cytoplasm. Functionally, peptide chain release factor 1 directs the termination of translation in response to the peptide chain termination codons UAG and UAA. The polypeptide is Peptide chain release factor 1 (Polynucleobacter necessarius subsp. necessarius (strain STIR1)).